We begin with the raw amino-acid sequence, 402 residues long: S-adenosylmethionine synthase (402 aa).

137 to 142 is an ATP binding site; sequence GQGSAD.

It belongs to the AdoMet synthase 2 family. Mg(2+) serves as cofactor.

It catalyses the reaction L-methionine + ATP + H2O = S-adenosyl-L-methionine + phosphate + diphosphate. It functions in the pathway amino-acid biosynthesis; S-adenosyl-L-methionine biosynthesis; S-adenosyl-L-methionine from L-methionine: step 1/1. Its function is as follows. Catalyzes the formation of S-adenosylmethionine from methionine and ATP. The chain is S-adenosylmethionine synthase from Pyrobaculum neutrophilum (strain DSM 2338 / JCM 9278 / NBRC 100436 / V24Sta) (Thermoproteus neutrophilus).